The following is a 356-amino-acid chain: Growth hormone-regulated TBC protein 1-A (356 aa).

Residues 1 to 29 form a disordered region; the sequence is MEERDRTGRTGQPQHRINQPSTARERANS. Positions 9 to 22 are enriched in polar residues; that stretch reads RTGQPQHRINQPST. The region spanning 87–277 is the Rab-GAP TBC domain; sequence GVPNEHRPLV…RIWDCLFYEG (191 aa).

Functionally, may act as a GTPase-activating protein for Rab family protein(s). This Danio rerio (Zebrafish) protein is Growth hormone-regulated TBC protein 1-A (grtp1a).